Consider the following 108-residue polypeptide: Urease subunit beta (108 aa).

The protein belongs to the urease beta subunit family. Heterotrimer of UreA (gamma), UreB (beta) and UreC (alpha) subunits. Three heterotrimers associate to form the active enzyme.

It localises to the cytoplasm. It carries out the reaction urea + 2 H2O + H(+) = hydrogencarbonate + 2 NH4(+). The protein operates within nitrogen metabolism; urea degradation; CO(2) and NH(3) from urea (urease route): step 1/1. This chain is Urease subunit beta, found in Nocardia farcinica (strain IFM 10152).